The primary structure comprises 956 residues: uncharacterized protein (956 aa).

The 102-residue stretch at 40–141 (PATKVSIDKI…IYCMTKAREA (102 aa)) folds into the Fibronectin type-III domain. 2 disordered regions span residues 152-173 (RNTI…PAPL) and 488-600 (NNGD…SYSH). Polar residues-rich tracts occupy residues 153 to 165 (NTIT…QPRN) and 488 to 523 (NNGD…SRTG). Threonine 154 is subject to Phosphothreonine. A phosphoserine mark is found at serine 501 and serine 520. Residues 524–543 (SIDLISNNNKSINNSNADSA) show a composition bias toward low complexity. Over residues 552-563 (VSYSPSNEPIQP) the composition is skewed to polar residues. The span at 564–574 (SSSLLSQLTQD) shows a compositional bias: low complexity. Residues 578–599 (RSMLSNHISSNNENKQQPSSYS) are compositionally biased toward polar residues. 3 positions are modified to phosphoserine: serine 802, serine 842, and serine 895. Positions 875 to 956 (VGPKVPAKEP…NLFNPHSHDS (82 aa)) are disordered. The segment covering 895–904 (SNSSISSAWS) has biased composition (low complexity).

This is an uncharacterized protein from Saccharomyces cerevisiae (strain ATCC 204508 / S288c) (Baker's yeast).